We begin with the raw amino-acid sequence, 325 residues long: Isoaspartyl peptidase/L-asparaginase (325 aa).

T193 serves as the catalytic Nucleophile. Residues 221 to 224 (RIGD) and 243 to 246 (TGKG) each bind substrate.

The protein belongs to the Ntn-hydrolase family. In terms of assembly, heterotetramer of two alpha and two beta chains arranged as a dimer of alpha/beta heterodimers. Post-translationally, cleaved into an alpha and beta chain by autocatalysis; this activates the enzyme. The N-terminal residue of the beta subunit is responsible for the nucleophile hydrolase activity. As to expression, expressed in ripening seeds and developing nodules.

It catalyses the reaction Cleavage of a beta-linked Asp residue from the N-terminus of a polypeptide.. In terms of biological role, degrades proteins damaged by L-isoaspartyl residue formation (also known as beta-Asp residues). Also has L-asparaginase activity, which is used to liberate stored nitrogen during seed development. In Lupinus luteus (European yellow lupine), this protein is Isoaspartyl peptidase/L-asparaginase.